Consider the following 159-residue polypeptide: Ribosomal RNA large subunit methyltransferase H (159 aa).

S-adenosyl-L-methionine contacts are provided by residues isoleucine 75, glycine 108, and 127-132 (FGRMTL).

The protein belongs to the RNA methyltransferase RlmH family. In terms of assembly, homodimer.

The protein localises to the cytoplasm. It carries out the reaction pseudouridine(1915) in 23S rRNA + S-adenosyl-L-methionine = N(3)-methylpseudouridine(1915) in 23S rRNA + S-adenosyl-L-homocysteine + H(+). Functionally, specifically methylates the pseudouridine at position 1915 (m3Psi1915) in 23S rRNA. In Lactococcus lactis subsp. lactis (strain IL1403) (Streptococcus lactis), this protein is Ribosomal RNA large subunit methyltransferase H.